We begin with the raw amino-acid sequence, 381 residues long: tRNA pseudouridine synthase D (381 aa).

Asp-81 acts as the Nucleophile in catalysis. The region spanning 160–335 is the TRUD domain; that stretch reads GMPNYFGSQR…TLGSRRFFWV (176 aa).

This sequence belongs to the pseudouridine synthase TruD family.

The catalysed reaction is uridine(13) in tRNA = pseudouridine(13) in tRNA. Responsible for synthesis of pseudouridine from uracil-13 in transfer RNAs. This chain is tRNA pseudouridine synthase D, found in Helicobacter pylori (strain ATCC 700392 / 26695) (Campylobacter pylori).